The following is a 341-amino-acid chain: Syntaxin-122 (341 aa).

Position 1 is an N-acetylmethionine (Met-1). Disordered stretches follow at residues 1 to 22 (MNDLLSGSFKTSVADGSSPPHS) and 111 to 137 (LDRANEVNRSLPESGPGSSSDRQRTSV). The Cytoplasmic portion of the chain corresponds to 1-284 (MNDLLSGSFK…ARFYQKNTRK (284 aa)). Composition is skewed to polar residues over residues 8–21 (SFKTSVADGSSPPH) and 126–137 (PGSSSDRQRTSV). The stretch at 64–185 (CHNLRSSNEQ…GEYPDEATLE (122 aa)) forms a coiled coil. The region spanning 213-275 (INEIQERHDA…RSGADRLVKA (63 aa)) is the t-SNARE coiled-coil homology domain. The chain crosses the membrane as a helical; Anchor for type IV membrane protein span at residues 285-305 (WTCFAILLLLIIVVLIVVFTV). The Vesicular portion of the chain corresponds to 306-341 (KPWESNGGGGGGAPRQATPVQAQPPPPPAVNRRLLR). The interval 312–341 (GGGGGGAPRQATPVQAQPPPPPAVNRRLLR) is disordered.

The protein belongs to the syntaxin family. As to quaternary structure, part of the t-SNARE complex.

It is found in the membrane. Vesicle trafficking protein that functions in the secretory pathway. The protein is Syntaxin-122 (SYP122) of Arabidopsis thaliana (Mouse-ear cress).